Consider the following 317-residue polypeptide: MLMIPTIAILSGGFSCEREISLMSGKAVKKALDSLSYNAIEIDVDSNIAEKLKKINPGLAFIALHGPYGEDGCIQGLLEILGIKYTHSGVMASAVAINKVMSKHIFRSLNIDTPKGYVISREDVLKNNIKIDYPYVLKPINEGSSIGVYIIFSHEDYLELKDNSSTIMEKMIVEEYIPGIELHTAVLLDEAIGTIEVRPKNKFYDYEAKYTDGFAEHIFPAKIPDNIYKMTLEHALKIHQFLGCKTISRSDFRYNPKNNTLKMLEINTHPGFTELSLVPEIAKLAKGINFNELVKIIIEDSLQHKNIRDLSHVEQYY.

The ATP-grasp domain occupies 103-299; the sequence is KHIFRSLNID…FNELVKIIIE (197 aa). 130-183 provides a ligand contact to ATP; sequence KIDYPYVLKPINEGSSIGVYIIFSHEDYLELKDNSSTIMEKMIVEEYIPGIELH. Positions 251, 265, and 267 each coordinate Mg(2+).

The protein belongs to the D-alanine--D-alanine ligase family. The cofactor is Mg(2+). It depends on Mn(2+) as a cofactor.

The protein localises to the cytoplasm. It catalyses the reaction 2 D-alanine + ATP = D-alanyl-D-alanine + ADP + phosphate + H(+). It participates in cell wall biogenesis; peptidoglycan biosynthesis. Its function is as follows. Cell wall formation. This Wolbachia sp. subsp. Drosophila simulans (strain wRi) protein is D-alanine--D-alanine ligase.